The chain runs to 233 residues: Large ribosomal subunit protein uL1 (233 aa).

This sequence belongs to the universal ribosomal protein uL1 family. In terms of assembly, part of the 50S ribosomal subunit.

Binds directly to 23S rRNA. The L1 stalk is quite mobile in the ribosome, and is involved in E site tRNA release. In terms of biological role, protein L1 is also a translational repressor protein, it controls the translation of the L11 operon by binding to its mRNA. The polypeptide is Large ribosomal subunit protein uL1 (Shewanella baltica (strain OS185)).